The sequence spans 431 residues: 5-methylthioadenosine/S-adenosylhomocysteine deaminase (431 aa).

The Zn(2+) site is built by His66 and His68. The substrate site is built by Glu95, Arg147, and His185. Position 212 (His212) interacts with Zn(2+). Residues Glu215 and Asp300 each contribute to the substrate site. Residue Asp300 participates in Zn(2+) binding.

It belongs to the metallo-dependent hydrolases superfamily. MTA/SAH deaminase family. The cofactor is Zn(2+).

It catalyses the reaction S-adenosyl-L-homocysteine + H2O + H(+) = S-inosyl-L-homocysteine + NH4(+). The enzyme catalyses S-methyl-5'-thioadenosine + H2O + H(+) = S-methyl-5'-thioinosine + NH4(+). Functionally, catalyzes the deamination of 5-methylthioadenosine and S-adenosyl-L-homocysteine into 5-methylthioinosine and S-inosyl-L-homocysteine, respectively. Is also able to deaminate adenosine. The polypeptide is 5-methylthioadenosine/S-adenosylhomocysteine deaminase (Desulfitobacterium hafniense (strain Y51)).